A 469-amino-acid chain; its full sequence is 2-amino-4-ketopentanoate thiolase beta subunit (469 aa).

Lys102 is subject to N6-(pyridoxal phosphate)lysine. Residues Asn128 and 238–242 (AGGGN) each bind pyridoxal 5'-phosphate.

The protein belongs to the threonine synthase family. Heterodimer with OrtA. The cofactor is pyridoxal 5'-phosphate.

The enzyme catalyses D-alanine + acetyl-CoA = (2R)-2-amino-4-oxopentanoate + CoA. Completely inhibited by p-chloromercuribenzoate (p-ClHgBzO) and acetyl-CoA, and partially inhibited by N-ethylmaleimide. Involved in the ornithine fermentation pathway. Catalyzes the thiolytic cleavage of 2-amino-4-ketopentanoate (AKP) with coenzyme A (CoA) to form acetyl-CoA and alanine. It is strictly specific for AKP. The protein is 2-amino-4-ketopentanoate thiolase beta subunit of Acetoanaerobium sticklandii (strain ATCC 12662 / DSM 519 / JCM 1433 / CCUG 9281 / NCIMB 10654 / HF) (Clostridium sticklandii).